We begin with the raw amino-acid sequence, 531 residues long: Probable mitochondrial-processing peptidase subunit beta, mitochondrial (531 aa).

A mitochondrion-targeting transit peptide spans 1–78; sequence MAMKNLLSLA…ENPDKRFLKY (78 aa). A disordered region spans residues 30–50; the sequence is SAIDSVPASASPTALSPPPPH. H141 lines the Zn(2+) pocket. The Proton acceptor role is filled by E144. Position 145 (H145) interacts with Zn(2+). E214 is an active-site residue. Zn(2+) is bound at residue E221.

Belongs to the peptidase M16 family. As to quaternary structure, heterodimer of an alpha subunit and a beta subunit subunits, forming the mitochondrial processing protease (MPP) in which the alpha subunit is involved in substrate recognition and binding and the beta subunit is the catalytic subunit. Component of the ubiquinol-cytochrome c oxidoreductase (cytochrome b-c1 complex, complex III, CIII), a multisubunit enzyme composed of 10 subunits. The complex is composed of 3 respiratory subunits cytochrome b (MT-CYB), cytochrome c1 (CYC1-1 or CYC1-2) and Rieske protein (UCR1-1 or UCR1-2), 2 core protein subunits MPPalpha1 (or MPPalpha2) and MPPB, and 5 low-molecular weight protein subunits QCR7-1 (or QCR7-2), UCRQ-1 (or UCRQ-2), QCR9, UCRY and probably QCR6-1 (or QCR6-2). The complex exists as an obligatory dimer and forms supercomplexes (SCs) in the inner mitochondrial membrane with NADH-ubiquinone oxidoreductase (complex I, CI), resulting in different assemblies (supercomplexes SCI(1)III(2) and SCI(2)III(4)). Requires Zn(2+) as cofactor.

The protein resides in the mitochondrion. The protein localises to the mitochondrion inner membrane. The enzyme catalyses Release of N-terminal transit peptides from precursor proteins imported into the mitochondrion, typically with Arg in position P2.. With respect to regulation, binding to the alpha subunit is required for catalytic activity. In terms of biological role, catalytic subunit of the essential mitochondrial processing protease (MPP), which cleaves the mitochondrial sequence off newly imported precursors proteins. Preferentially, cleaves after an arginine at position P2. Component of the ubiquinol-cytochrome c oxidoreductase, a multisubunit transmembrane complex that is part of the mitochondrial electron transport chain which drives oxidative phosphorylation. The respiratory chain contains 3 multisubunit complexes succinate dehydrogenase (complex II, CII), ubiquinol-cytochrome c oxidoreductase (cytochrome b-c1 complex, complex III, CIII) and cytochrome c oxidase (complex IV, CIV), that cooperate to transfer electrons derived from NADH and succinate to molecular oxygen, creating an electrochemical gradient over the inner membrane that drives transmembrane transport and the ATP synthase. The cytochrome b-c1 complex catalyzes electron transfer from ubiquinol to cytochrome c, linking this redox reaction to translocation of protons across the mitochondrial inner membrane, with protons being carried across the membrane as hydrogens on the quinol. In the process called Q cycle, 2 protons are consumed from the matrix, 4 protons are released into the intermembrane space and 2 electrons are passed to cytochrome c. The sequence is that of Probable mitochondrial-processing peptidase subunit beta, mitochondrial (MPPbeta) from Arabidopsis thaliana (Mouse-ear cress).